The sequence spans 545 residues: Carboxypeptidase Y homolog A (545 aa).

The first 17 residues, 1–17 (MKSLALALLVGGAIAAG), serve as a signal peptide directing secretion. A propeptide spanning residues 18–123 (PQQQVLQAPV…KLEAYDLRVK (106 aa)) is cleaved from the precursor. Cystine bridges form between Cys-177-Cys-416, Cys-311-Cys-325, Cys-335-Cys-358, Cys-342-Cys-351, and Cys-380-Cys-386. N-linked (GlcNAc...) asparagine glycosylation occurs at Asn-208. Ser-264 is a catalytic residue. The active site involves Asp-455. N-linked (GlcNAc...) asparagine glycosylation is found at Asn-485, Asn-491, and Asn-506. His-517 is a catalytic residue.

It belongs to the peptidase S10 family.

The protein resides in the vacuole. It catalyses the reaction Release of a C-terminal amino acid with broad specificity.. In terms of biological role, vacuolar carboxypeptidase involved in degradation of small peptides. Digests preferentially peptides containing an aliphatic or hydrophobic residue in P1' position, as well as methionine, leucine or phenylalanine in P1 position of ester substrate. This Blastomyces gilchristii (strain SLH14081) (Blastomyces dermatitidis) protein is Carboxypeptidase Y homolog A (CPYA).